Here is a 360-residue protein sequence, read N- to C-terminus: S-adenosylmethionine:tRNA ribosyltransferase-isomerase (360 aa).

It belongs to the QueA family. Monomer.

It localises to the cytoplasm. The catalysed reaction is 7-aminomethyl-7-carbaguanosine(34) in tRNA + S-adenosyl-L-methionine = epoxyqueuosine(34) in tRNA + adenine + L-methionine + 2 H(+). The protein operates within tRNA modification; tRNA-queuosine biosynthesis. Transfers and isomerizes the ribose moiety from AdoMet to the 7-aminomethyl group of 7-deazaguanine (preQ1-tRNA) to give epoxyqueuosine (oQ-tRNA). This is S-adenosylmethionine:tRNA ribosyltransferase-isomerase from Nitrobacter winogradskyi (strain ATCC 25391 / DSM 10237 / CIP 104748 / NCIMB 11846 / Nb-255).